A 215-amino-acid polypeptide reads, in one-letter code: GTP-binding nuclear protein Ran (215 aa).

The Small GTPase Ran-type domain occupies 6-170 (DIPTFKLVLV…LWLVRKLLGD (165 aa)). GTP contacts are provided by residues 17 to 24 (DGGTGKTT), 35 to 41 (EKKYVAT), Gly-67, 121 to 124 (NFVD), and 149 to 151 (SAK). Positions 36–44 (KKYVATLGV) are switch-I. The tract at residues 67–83 (GQEKFGGLRDGYYIQGQ) is switch-II. Positions 210–215 (DDDEDL) are interaction with RANBP1.

The protein belongs to the small GTPase superfamily. Ran family. As to quaternary structure, monomer. Interacts with RANGAP1, which promotes RAN-mediated GTP hydrolysis. Interacts with KPNB1. Interaction with KPNB1 inhibits RANGAP1-mediated stimulation of GTPase activity. Interacts with RCC1 which promotes the exchange of RAN-bound GDP by GTP. Interaction with KPNB1 inhibits RCC1-mediated exchange of RAN-bound GDP by GTP. Interacts (GTP-bound form) with TNPO1; the interaction is direct. Interacts with KPNB1 and with TNPO1; both inhibit RAN GTPase activity. Interacts (via C-terminus) with RANBP1, which alleviates the inhibition of RAN GTPase activity. Interacts with RANGRF, which promotes the release of bound guanine nucleotide. RANGRF and RCC1 compete for an overlapping binding site on RAN. Identified in a complex with KPNA2 and CSE1L; interaction with RANBP1 mediates dissociation of RAN from this complex. Interaction with both RANBP1 and KPNA2 promotes dissociation of the complex between RAN and KPNB1. Identified in a complex composed of RAN, RANGAP1 and RANBP1. Identified in a complex that contains TNPO1, RAN and RANBP1. Identified in a nuclear export complex with XPO1. Interaction with RANBP1 or RANBP2 induces a conformation change in the complex formed by XPO1 and RAN that triggers the release of the nuclear export signal of cargo proteins. Component of a nuclear export receptor complex composed of KPNB1, RAN, SNUPN and XPO1. The cofactor is Mg(2+).

It is found in the nucleus. Its subcellular location is the nucleus envelope. The protein resides in the cytoplasm. It localises to the cytosol. GTPase involved in nucleocytoplasmic transport, participating both to the import and the export from the nucleus of proteins and RNAs. Switches between a cytoplasmic GDP- and a nuclear GTP-bound state by nucleotide exchange and GTP hydrolysis. Nuclear import receptors such as importin beta bind their substrates only in the absence of GTP-bound RAN and release them upon direct interaction with GTP-bound RAN, while export receptors behave in the opposite way. Thereby, RAN controls cargo loading and release by transport receptors in the proper compartment and ensures the directionality of the transport. Interaction with RANBP1 induces a conformation change in the complex formed by XPO1 and RAN that triggers the release of the nuclear export signal of cargo proteins. RAN (GTP-bound form) triggers microtubule assembly at mitotic chromosomes and is required for normal mitotic spindle assembly and chromosome segregation. Required for normal progress through mitosis. The sequence is that of GTP-binding nuclear protein Ran (ran-1) from Onchocerca volvulus.